The chain runs to 403 residues: Zinc finger HIT domain-containing protein 2 (403 aa).

Residue Met1 is modified to N-acetylmethionine. Residues Cys7, Cys10, Cys22, Cys25, Cys30, Cys34, His38, and Cys41 each coordinate Zn(2+). The segment at 7–41 (CGFCPAGEVQPARYTCPRCNAPYCSLRCYRTHGTC) adopts an HIT-type zinc-finger fold. Residues 72 to 98 (RQQRETEDEPGEAGLSSGPAPGGLSGL) are disordered. Phosphothreonine is present on Thr161.

As to quaternary structure, interacts (via HIT-type zinc finger) with RUVBL2 in the presence of ATP or ADP; shows a stronger interaction in the presence of ADP. As to expression, low expression in most tissues; highly expressed in testis.

In terms of biological role, may act as a bridging factor mediating the interaction between the R2TP/Prefoldin-like (R2TP/PFDL) complex and U5 small nuclear ribonucleoprotein (U5 snRNP). Required for the interaction of R2TP complex subunit RPAP3 and prefoldin-like subunit URI1 with U5 snRNP proteins EFTUD2 and PRPF8. May play a role in regulating the composition of the U5 snRNP complex. The protein is Zinc finger HIT domain-containing protein 2 (ZNHIT2) of Homo sapiens (Human).